The chain runs to 202 residues: Imidazole glycerol phosphate synthase subunit HisH (202 aa).

The Glutamine amidotransferase type-1 domain occupies 3–202 (RIVILDYGLG…KILKNFVDMC (200 aa)). Catalysis depends on C79, which acts as the Nucleophile. Catalysis depends on residues H183 and E185.

As to quaternary structure, heterodimer of HisH and HisF.

The protein resides in the cytoplasm. It carries out the reaction 5-[(5-phospho-1-deoxy-D-ribulos-1-ylimino)methylamino]-1-(5-phospho-beta-D-ribosyl)imidazole-4-carboxamide + L-glutamine = D-erythro-1-(imidazol-4-yl)glycerol 3-phosphate + 5-amino-1-(5-phospho-beta-D-ribosyl)imidazole-4-carboxamide + L-glutamate + H(+). The catalysed reaction is L-glutamine + H2O = L-glutamate + NH4(+). It participates in amino-acid biosynthesis; L-histidine biosynthesis; L-histidine from 5-phospho-alpha-D-ribose 1-diphosphate: step 5/9. Its function is as follows. IGPS catalyzes the conversion of PRFAR and glutamine to IGP, AICAR and glutamate. The HisH subunit catalyzes the hydrolysis of glutamine to glutamate and ammonia as part of the synthesis of IGP and AICAR. The resulting ammonia molecule is channeled to the active site of HisF. The sequence is that of Imidazole glycerol phosphate synthase subunit HisH from Methanosarcina barkeri (strain Fusaro / DSM 804).